The following is a 275-amino-acid chain: Membrane protein insertase MisCB (275 aa).

A signal peptide spans 1–18 (MLKTYQKLLAMGIFLIVL). Cys-19 is lipidated: N-palmitoyl cysteine. Residue Cys-19 is the site of S-diacylglycerol cysteine attachment. 5 consecutive transmembrane segments (helical) span residues 63–83 (YGLS…PLFV), 139–159 (AMGC…YYAI), 172–192 (WFSL…MYFV), 219–239 (LMVF…PAAL), and 240–260 (PLYW…LQMT).

Belongs to the OXA1/ALB3/YidC family. Type 2 subfamily. In terms of assembly, mostly monomeric, it may also form dimers. Interacts with SpoIIIAE. Forms a complex with the F(1)F(0) ATP synthase in which can be found the alpha, beta, gamma, delta and epsilon subunits of F(1) and a, b and subunits of F(0). YqgA is found in the same complex.

It localises to the cell membrane. Its function is as follows. Required for the insertion and/or proper folding and/or complex formation of integral membrane proteins into the membrane. Involved in integration of membrane proteins that insert both dependently and independently of the Sec translocase complex, as well as at least some lipoproteins. Also involved in protein secretion processes. It has an overlapping, although partly distinct, function compared to SpoIIIJ(MisCB). The protein is Membrane protein insertase MisCB (misCB) of Bacillus subtilis (strain 168).